The sequence spans 559 residues: Pentatricopeptide repeat-containing protein At2g42920, chloroplastic (559 aa).

A chloroplast-targeting transit peptide spans 1–14; that stretch reads MSPTILSFSGVTVP. PPR repeat units follow at residues 88-122, 125-159, 160-190, 191-221, 222-256, 257-291, 292-322, 323-357, 358-388, and 394-424; these read NPFV…SPSV, QRLT…GLED, DSFI…MIGF, DVVA…MPQR, NGVS…DVKP, DGFT…RFEL, NSIV…APKK, QLSC…GLEP, DSVS…MKEK, and SIKH…MPVE. The tract at residues 429-504 is type E motif; the sequence is IWSSLLSACR…EVGCSSIEVD (76 aa). The tract at residues 505–535 is type E(+) motif; that stretch reads FEVHEFISCGGTHPKSAEIYSLLDILNWDVS.

The protein belongs to the PPR family. PCMP-E subfamily.

The protein resides in the plastid. It localises to the chloroplast. The sequence is that of Pentatricopeptide repeat-containing protein At2g42920, chloroplastic (PCMP-E75) from Arabidopsis thaliana (Mouse-ear cress).